The primary structure comprises 174 residues: Methylated-DNA--protein-cysteine methyltransferase (174 aa).

Cys-141 serves as the catalytic Nucleophile; methyl group acceptor.

The protein belongs to the MGMT family.

The protein localises to the cytoplasm. It carries out the reaction a 6-O-methyl-2'-deoxyguanosine in DNA + L-cysteinyl-[protein] = S-methyl-L-cysteinyl-[protein] + a 2'-deoxyguanosine in DNA. It catalyses the reaction a 4-O-methyl-thymidine in DNA + L-cysteinyl-[protein] = a thymidine in DNA + S-methyl-L-cysteinyl-[protein]. Its function is as follows. Involved in the cellular defense against the biological effects of O6-methylguanine (O6-MeG) and O4-methylthymine (O4-MeT) in DNA. Repairs the methylated nucleobase in DNA by stoichiometrically transferring the methyl group to a cysteine residue in the enzyme. This is a suicide reaction: the enzyme is irreversibly inactivated. This is Methylated-DNA--protein-cysteine methyltransferase from Thermococcus kodakarensis (strain ATCC BAA-918 / JCM 12380 / KOD1) (Pyrococcus kodakaraensis (strain KOD1)).